A 393-amino-acid polypeptide reads, in one-letter code: NAD(P)H-quinone oxidoreductase subunit H, chloroplastic (393 aa).

It belongs to the complex I 49 kDa subunit family. In terms of assembly, NDH is composed of at least 16 different subunits, 5 of which are encoded in the nucleus.

It is found in the plastid. It localises to the chloroplast thylakoid membrane. It carries out the reaction a plastoquinone + NADH + (n+1) H(+)(in) = a plastoquinol + NAD(+) + n H(+)(out). The catalysed reaction is a plastoquinone + NADPH + (n+1) H(+)(in) = a plastoquinol + NADP(+) + n H(+)(out). NDH shuttles electrons from NAD(P)H:plastoquinone, via FMN and iron-sulfur (Fe-S) centers, to quinones in the photosynthetic chain and possibly in a chloroplast respiratory chain. The immediate electron acceptor for the enzyme in this species is believed to be plastoquinone. Couples the redox reaction to proton translocation, and thus conserves the redox energy in a proton gradient. The sequence is that of NAD(P)H-quinone oxidoreductase subunit H, chloroplastic from Panax ginseng (Korean ginseng).